The sequence spans 70 residues: Small ribosomal subunit protein bS21C (70 aa).

This sequence belongs to the bacterial ribosomal protein bS21 family.

The sequence is that of Small ribosomal subunit protein bS21C from Burkholderia pseudomallei (strain 1710b).